The chain runs to 49 residues: uncharacterized protein (49 aa).

Residues 20 to 42 (LFLVGLTIGKMATSRILSFLGFI) traverse the membrane as a helical segment.

The protein localises to the membrane. This is an uncharacterized protein from Dictyostelium discoideum (Social amoeba).